Consider the following 749-residue polypeptide: Chaperone protein dnaK3 (749 aa).

Thr198 is modified (phosphothreonine; by autocatalysis). Basic and acidic residues-rich tracts occupy residues Arg643–Arg653, Tyr661–Asn694, and Pro711–Ser724. The interval Arg643 to Phe749 is disordered. The segment covering Gly740–Phe749 has biased composition (acidic residues).

The protein belongs to the heat shock protein 70 family.

Acts as a chaperone. This Synechococcus elongatus (strain ATCC 33912 / PCC 7942 / FACHB-805) (Anacystis nidulans R2) protein is Chaperone protein dnaK3 (dnaK3).